Reading from the N-terminus, the 478-residue chain is Aspartyl/glutamyl-tRNA(Asn/Gln) amidotransferase subunit B (478 aa).

This sequence belongs to the GatB/GatE family. GatB subfamily. In terms of assembly, heterotrimer of A, B and C subunits.

It carries out the reaction L-glutamyl-tRNA(Gln) + L-glutamine + ATP + H2O = L-glutaminyl-tRNA(Gln) + L-glutamate + ADP + phosphate + H(+). The enzyme catalyses L-aspartyl-tRNA(Asn) + L-glutamine + ATP + H2O = L-asparaginyl-tRNA(Asn) + L-glutamate + ADP + phosphate + 2 H(+). Its function is as follows. Allows the formation of correctly charged Asn-tRNA(Asn) or Gln-tRNA(Gln) through the transamidation of misacylated Asp-tRNA(Asn) or Glu-tRNA(Gln) in organisms which lack either or both of asparaginyl-tRNA or glutaminyl-tRNA synthetases. The reaction takes place in the presence of glutamine and ATP through an activated phospho-Asp-tRNA(Asn) or phospho-Glu-tRNA(Gln). This is Aspartyl/glutamyl-tRNA(Asn/Gln) amidotransferase subunit B from Brevibacillus brevis (strain 47 / JCM 6285 / NBRC 100599).